The following is a 358-amino-acid chain: MFEAVEELVAEHADLEKKLADPSVHSDQANARKLNKRYAELTPIVATFRSWKQTGDDMETAREFAADDPDFAAEVKELDKQRDELTEKLRLLLVPRDPSDDKDVILEIKAGAGGDESALFAGDLLRMYLRYAERIGWKTEIIDSTESELGGYKDVQVAVKTKGGQGATEPGQGVWARLKYEGGVHRVQRVPATESQGRIHTSAAGVLVTPEAEEIDVEINPNDLRIDVYRSSGPGGQSVNTTDSAVRITHIPTGVVASCQNEKSQLQNKEQAMRILRSRLLAAAQEEAEKEAADARRSQVRTVDRSEKIRTYNFPENRISDHRVGFKAYNLDQVLDGDLDSVIQACVDADSAAKLAAA.

Gln-237 is modified (N5-methylglutamine).

This sequence belongs to the prokaryotic/mitochondrial release factor family. In terms of processing, methylated by PrmC. Methylation increases the termination efficiency of RF1.

It is found in the cytoplasm. Peptide chain release factor 1 directs the termination of translation in response to the peptide chain termination codons UAG and UAA. The sequence is that of Peptide chain release factor 1 from Streptomyces coelicolor (strain ATCC BAA-471 / A3(2) / M145).